Consider the following 415-residue polypeptide: G patch domain-containing protein 4 (415 aa).

M1 is modified (N-acetylmethionine). At T4 the chain carries Phosphothreonine. The 47-residue stretch at 11–57 folds into the G-patch domain; the sequence is GMKFAEEQLLKHGWTQGKGLGRRENGITQALKVTLKQDNHGVGHDPA. K46 is covalently cross-linked (Glycyl lysine isopeptide (Lys-Gly) (interchain with G-Cter in SUMO2)). T116 is subject to Phosphothreonine. Disordered stretches follow at residues 116–141 and 191–415; these read TSGE…TPPK and LGTS…VDLS. Residues 118–141 are compositionally biased toward basic and acidic residues; that stretch reads GEEKPDRDLGNCSDVDNHEPTPPK. S130 carries the phosphoserine modification. Over residues 191-201 the composition is skewed to polar residues; the sequence is LGTSQPLTDSE. The span at 224–239 shows a compositional bias: basic and acidic residues; that stretch reads SLGDELLGHTDRSFRD. At S258 the chain carries Phosphoserine. Over residues 335 to 345 the composition is skewed to acidic residues; it reads EDLDTQEEEGK. The segment covering 353 to 364 has biased composition (basic residues); the sequence is RKVRRKDKRKRQ. The span at 387-397 shows a compositional bias: basic and acidic residues; it reads AGERSRQYPKE. A compositionally biased stretch (basic residues) spans 398–407; the sequence is RAKKKKRKRD.

This Mus musculus (Mouse) protein is G patch domain-containing protein 4 (Gpatch4).